The sequence spans 511 residues: Maturase K (511 aa).

This sequence belongs to the intron maturase 2 family. MatK subfamily.

The protein resides in the plastid. It is found in the chloroplast. Functionally, usually encoded in the trnK tRNA gene intron. Probably assists in splicing its own and other chloroplast group II introns. The protein is Maturase K of Hordeum secalinum (Meadow barley).